The sequence spans 156 residues: Ribosome maturation factor RimP (156 aa).

It belongs to the RimP family.

It is found in the cytoplasm. Its function is as follows. Required for maturation of 30S ribosomal subunits. In Lysinibacillus sphaericus (strain C3-41), this protein is Ribosome maturation factor RimP.